The following is a 113-amino-acid chain: Class I hydrophobin 1 (113 aa).

The first 17 residues, 1-17, serve as a signal peptide directing secretion; the sequence is MQFKFLSTVALATLAVA. Disulfide bonds link Cys-32-Cys-92, Cys-39-Cys-86, Cys-40-Cys-73, and Cys-93-Cys-106.

The protein belongs to the fungal hydrophobin family. In terms of assembly, self-assembles to form functional amyloid fibrils called rodlets. Self-assembly into fibrillar rodlets occurs spontaneously at hydrophobic:hydrophilic interfaces and the rodlets further associate laterally to form amphipathic monolayers.

The protein localises to the secreted. The protein resides in the cell wall. In terms of biological role, aerial growth, conidiation, and dispersal of filamentous fungi in the environment rely upon a capability of their secreting small amphipathic proteins called hydrophobins (HPBs) with low sequence identity. Class I can self-assemble into an outermost layer of rodlet bundles on aerial cell surfaces, conferring cellular hydrophobicity that supports fungal growth, development and dispersal; whereas Class II form highly ordered films at water-air interfaces through intermolecular interactions but contribute nothing to the rodlet structure. CoH1 is an asexual monokaryon-specific class I hydrophobin that is involved in aerial growth of mycelia. This Coprinopsis cinerea (Inky cap fungus) protein is Class I hydrophobin 1.